The chain runs to 402 residues: LIM/homeobox protein Lhx5 (402 aa).

2 LIM zinc-binding domains span residues 3 to 61 and 62 to 125; these read AHCA…RRFG and TKCA…ASSL. Disordered regions lie at residues 133-187, 291-335, and 365-392; these read VSSC…RTTI, NYDF…GHHP, and SGEVFTGGPSPPFSMSNNSGFSGPLPHQ. Residues 151 to 167 are compositionally biased toward basic and acidic residues; that stretch reads DESKETDHSTSSDKETA. The homeobox DNA-binding region spans 180 to 239; it reads RRGPRTTIKAKQLETLKAAFIATPKPTRHIREQLAQETGLNMRVIQVWFQNRRSKERRMK. Positions 300–319 are enriched in polar residues; that stretch reads PSSQTQSPADSSYLQNSGPG.

As to quaternary structure, interacts with ldb1 and with the N-terminus of rnf12.

The protein resides in the nucleus. In terms of biological role, probably involved in the patterning of the nervous system, in particular in the early specification of the diencephalon. In Xenopus laevis (African clawed frog), this protein is LIM/homeobox protein Lhx5 (lhx5).